The following is a 512-amino-acid chain: Vacuolar protein sorting-associated protein 30 (512 aa).

The segment at 294 to 511 is BARA; sequence TNIYNESFRI…LVFCSSKLSL (218 aa).

Belongs to the beclin family. In terms of assembly, component of the autophagy-specific VPS34 PI3-kinase complex I composed of VPS15, VPS30, VPS34, ATG14 and ATG38; and of the VPS34 PI3-kinase complex II composed of VPS15, VPS30, VPS34 and VPS38.

It is found in the endosome membrane. The protein localises to the vacuole membrane. Its subcellular location is the preautophagosomal structure membrane. Functionally, required for cytoplasm to vacuole transport (Cvt), autophagy, nucleophagy, and mitophagy, as a part of the autophagy-specific VPS34 PI3-kinase complex I. This complex is essential to recruit the ATG8-phosphatidylinositol conjugate and the ATG12-ATG5 conjugate to the pre-autophagosomal structure. Also involved in endosome-to-Golgi retrograde transport as part of the VPS34 PI3-kinase complex II. This second complex is required for the endosome-to-Golgi retrieval of PEP1 and KEX2, and the recruitment of VPS5 and VPS7, two components of the retromer complex, to endosomal membranes (probably through the synthesis of a specific pool of phosphatidylinositol 3-phosphate recruiting the retromer to the endosomes). Required for survival and/or proliferation in kidneys but not brain. The protein is Vacuolar protein sorting-associated protein 30 of Candida glabrata (strain ATCC 2001 / BCRC 20586 / JCM 3761 / NBRC 0622 / NRRL Y-65 / CBS 138) (Yeast).